Consider the following 166-residue polypeptide: Bacterial microcompartment shell protein EutK (166 aa).

The BMC domain maps to 4 to 88 (ALGLLEVDGM…PDDDTQWLVT (85 aa)). The 57-residue stretch at 109–165 (ESADELLALLTSVRQGMTAGEVAAHFGWPLEKARNALEQLFSAGTLRKRSSRYRLKP) folds into the EutK-Ctail domain.

The protein belongs to the bacterial microcompartments protein family. As to quaternary structure, monomeric in solution.

The protein resides in the bacterial microcompartment. Its pathway is amine and polyamine degradation; ethanolamine degradation. Probably a minor component of the bacterial microcompartment (BMC) shell dedicated to ethanolamine degradation. It might bind nucleic acids. The chain is Bacterial microcompartment shell protein EutK (eutK) from Escherichia coli (strain K12).